Here is a 135-residue protein sequence, read N- to C-terminus: Small ribosomal subunit protein bS16m/bS16c (135 aa).

A chloroplast and mitochondrion-targeting transit peptide spans 1–7 (MVVRIRL). The segment at 87-135 (PMVAMGRKGGARDTRPVDPMTGRYVDAENKTVNANDNQPKEEDTEAKSA) is disordered. Residues 124-135 (QPKEEDTEAKSA) show a composition bias toward basic and acidic residues.

It belongs to the bacterial ribosomal protein bS16 family. As to quaternary structure, component of the mitochondrial ribosome small subunit. In terms of tissue distribution, expressed at low levels in flowers, and, to a lower extent, in leaves, stems and roots.

The protein localises to the mitochondrion. Its subcellular location is the plastid. It is found in the chloroplast. This chain is Small ribosomal subunit protein bS16m/bS16c, found in Arabidopsis thaliana (Mouse-ear cress).